Consider the following 232-residue polypeptide: UPF0235 protein At5g63440 (232 aa).

It belongs to the UPF0235 family. As to quaternary structure, interacts with CTN.

The protein resides in the nucleus speckle. In terms of biological role, may play a role during early embryonic development. Probably involved in pre-mRNA splicing. This chain is UPF0235 protein At5g63440, found in Arabidopsis thaliana (Mouse-ear cress).